Here is a 525-residue protein sequence, read N- to C-terminus: Glutamate--cysteine ligase (525 aa).

Belongs to the glutamate--cysteine ligase type 1 family. Type 1 subfamily.

The enzyme catalyses L-cysteine + L-glutamate + ATP = gamma-L-glutamyl-L-cysteine + ADP + phosphate + H(+). It functions in the pathway sulfur metabolism; glutathione biosynthesis; glutathione from L-cysteine and L-glutamate: step 1/2. This Hahella chejuensis (strain KCTC 2396) protein is Glutamate--cysteine ligase.